Here is a 533-residue protein sequence, read N- to C-terminus: Calcium uptake protein 1 homolog, mitochondrial (533 aa).

The N-terminal 13 residues, 1–13 (MLRHNFRSSIFIR), are a transit peptide targeting the mitochondrion. Residues 127-147 (PFRPEASQKEESTDSGTEIEV) form a disordered region. 3 EF-hand domains span residues 270-305 (TSHA…IMSQ), 337-358 (KDGK…LQHD), and 465-500 (LSDH…RMRR). Ca(2+) contacts are provided by Asp283, Asp285, Asn287, and Glu294.

This sequence belongs to the MICU1 family. MICU1 subfamily.

The protein resides in the mitochondrion intermembrane space. Its subcellular location is the mitochondrion inner membrane. Its function is as follows. Calcium sensor of the mitochondrial calcium uniporter (mcu-1) channel, which senses calcium level via its EF-hand domains. At low calcium levels, micu-1 occludes the pore of the mcu-1 channel, preventing mitochondrial calcium uptake. At higher calcium levels, calcium-binding to micu-1 induces a conformational change that weakens mcu-1-micu-1 interactions and moves micu-1 away from the pore, allowing calcium permeation through the mcu-1 channel. Also required to protect against manganese toxicity by preventing manganese uptake by mcu-1. Modulates the activity of the mitochondrial calcium uniporter protein mcu-1 depending on the level of intracellular calcium in PLM touch receptor neurons following axonal injury. The sequence is that of Calcium uptake protein 1 homolog, mitochondrial from Caenorhabditis briggsae.